A 666-amino-acid chain; its full sequence is Neopullulanase 1 (666 aa).

A signal peptide spans 1-29 (MIKLLKPMSLSILLVFILSFSFPFPTAKA). Ala31, Asp33, Asn35, Asp71, Asp125, Asn174, Asp176, Asn179, Asp180, Gly216, and Asp218 together coordinate Ca(2+). His296 is a substrate binding site. 5 residues coordinate Ca(2+): Asp305, Asn309, Phe310, Ser312, and Glu317. Substrate is bound at residue Arg383. Residue Asp385 is the Nucleophile of the active site. The active-site Proton donor is the Glu425. Substrate-binding positions include 500 to 501 (HD), Asp545, and Arg549.

The protein belongs to the glycosyl hydrolase 13 family. It depends on Ca(2+) as a cofactor.

Its subcellular location is the secreted. It catalyses the reaction Hydrolysis of pullulan to panose (6-alpha-D-glucosylmaltose).. In terms of biological role, endohydrolysis of 1,4-alpha-glucosidic linkages in pullulan to form panose. Also hydrolyzes cyclodextrins. The chain is Neopullulanase 1 (tvaI) from Thermoactinomyces vulgaris.